The following is a 163-amino-acid chain: D-aminoacyl-tRNA deacylase (163 aa).

The Gly-cisPro motif, important for rejection of L-amino acids motif lies at 141–142 (GP).

This sequence belongs to the DTD family. In terms of assembly, homodimer.

It is found in the cytoplasm. The enzyme catalyses glycyl-tRNA(Ala) + H2O = tRNA(Ala) + glycine + H(+). It carries out the reaction a D-aminoacyl-tRNA + H2O = a tRNA + a D-alpha-amino acid + H(+). Its function is as follows. An aminoacyl-tRNA editing enzyme that deacylates mischarged D-aminoacyl-tRNAs. Also deacylates mischarged glycyl-tRNA(Ala), protecting cells against glycine mischarging by AlaRS. Acts via tRNA-based rather than protein-based catalysis; rejects L-amino acids rather than detecting D-amino acids in the active site. By recycling D-aminoacyl-tRNA to D-amino acids and free tRNA molecules, this enzyme counteracts the toxicity associated with the formation of D-aminoacyl-tRNA entities in vivo and helps enforce protein L-homochirality. This is D-aminoacyl-tRNA deacylase from Neisseria gonorrhoeae (strain ATCC 700825 / FA 1090).